A 98-amino-acid chain; its full sequence is DNA-binding protein Fis (98 aa).

Residues 74–93 (QTRAATMMGINRGTLRKKLK) constitute a DNA-binding region (H-T-H motif).

It belongs to the transcriptional regulatory Fis family. As to quaternary structure, homodimer.

Functionally, activates ribosomal RNA transcription. Plays a direct role in upstream activation of rRNA promoters. The sequence is that of DNA-binding protein Fis from Vibrio atlanticus (strain LGP32) (Vibrio splendidus (strain Mel32)).